We begin with the raw amino-acid sequence, 89 residues long: Small ribosomal subunit protein uS15 (89 aa).

Belongs to the universal ribosomal protein uS15 family. Part of the 30S ribosomal subunit. Forms a bridge to the 50S subunit in the 70S ribosome, contacting the 23S rRNA.

In terms of biological role, one of the primary rRNA binding proteins, it binds directly to 16S rRNA where it helps nucleate assembly of the platform of the 30S subunit by binding and bridging several RNA helices of the 16S rRNA. Functionally, forms an intersubunit bridge (bridge B4) with the 23S rRNA of the 50S subunit in the ribosome. This chain is Small ribosomal subunit protein uS15, found in Chlamydia pneumoniae (Chlamydophila pneumoniae).